A 1644-amino-acid polypeptide reads, in one-letter code: Terminal uridylyltransferase 4 (1644 aa).

2 disordered regions span residues 30–60 and 75–277; these read SNQT…KQND and AASV…EMDY. Serine 102 is modified (phosphoserine). Over residues 108-123 the composition is skewed to polar residues; sequence KGSSQTKLEKTPSLQT. Serine 131 bears the Phosphoserine mark. Polar residues-rich tracts occupy residues 146–156 and 163–174; these read AEATTEKALNS and TPTSQMKLQKTP. Serine 176 carries the phosphoserine modification. Polar residues-rich tracts occupy residues 194-209 and 226-242; these read QTES…SSFV and LENS…TDNI. The span at 258–272 shows a compositional bias: basic and acidic residues; sequence DLSKMKSEESNKENS. The required for interaction with LIN28A and pre-let-7 RNA stretch occupies residues 273 to 353; that stretch reads SEMDYLENAT…KEKRHKKNIL (81 aa). Cysteine 326, cysteine 329, histidine 342, and histidine 348 together coordinate Zn(2+). The segment covering 603-623 has biased composition (basic and acidic residues); that stretch reads IADENKAKADEPKDDTKKTET. Positions 603-640 are disordered; the sequence is IADENKAKADEPKDDTKKTETDNQSNAAKAKHGKSPLT. Residues 649 to 698 enclose the PAP-associated 1 domain; sequence LGQLWLELLKFYTLDFALEEYVICVRIQDILTRENKNWPKRRIAIEDPFS. Disordered stretches follow at residues 733–759 and 812–841; these read KGGN…VKSD and HGQD…DLTP. The segment covering 745 to 755 has biased composition (basic residues); sequence KEKGKLSSKKP. Positions 815–827 are enriched in low complexity; it reads DSSSLSTASGGSD. Basic and acidic residues predominate over residues 828 to 837; that stretch reads LKQKSAEKQG. The interval 918–1634 is sufficient for monouridylation activity; that stretch reads DKFILTSGKP…CATRRCRERC (717 aa). A CCHC-type 1 zinc finger spans residues 930–947; sequence IVCSICKKDGHSKNDCPE. UTP-binding positions include 1015-1018, 1025-1028, asparagine 1098, lysine 1120, 1138-1142, and histidine 1254; these read SSKN, SDLD, and SYAYI. Residues aspartate 1026 and aspartate 1028 each contribute to the Mg(2+) site. In terms of domain architecture, PAP-associated 2 spans 1201-1254; that stretch reads SLGELWLGLLRFYTEEFDFKEYVISIRQKKLLTTFEKQWTSKCIAIEDPFDLNH. The segment at 1310 to 1327 adopts a CCHC-type 2 zinc-finger fold; that stretch reads RCCRVCGKIGHYMKDCPK. Residues 1329-1350 are disordered; that stretch reads KRLKKKDSEEEKEGNEEEKDSR. A CCHC-type 3 zinc finger spans residues 1358-1375; that stretch reads LRCFICGDAGHVRRECPE. Residues 1402–1427 are compositionally biased toward low complexity; sequence AGSAQQQSDQSIRTRQSSECSDSPSY. Positions 1402 to 1483 are disordered; that stretch reads AGSAQQQSDQ…LYNFPQSPPA (82 aa). Residues 1428-1450 are compositionally biased toward pro residues; sequence SPQPQPFPQNSPQPSALPPPPSQ. Residues 1451–1473 are compositionally biased toward low complexity; the sequence is PGSQPKLGPPQQGGQPPHQVQMP. An Omega-N-methylarginine modification is found at arginine 1624.

This sequence belongs to the DNA polymerase type-B-like family. In terms of assembly, interacts with LIN28A in the presence of pre-let-7 RNA. Interacts with T2BP. Interacts with MOV10; the interaction is RNA-dependent. Mg(2+) serves as cofactor. Requires Mn(2+) as cofactor. As to expression, ubiquitously expressed.

The protein resides in the nucleus. It is found in the cytoplasm. Its subcellular location is the cytoplasmic ribonucleoprotein granule. The catalysed reaction is RNA(n) + UTP = RNA(n)-3'-uridine ribonucleotide + diphosphate. Its function is as follows. Uridylyltransferase that mediates the terminal uridylation of mRNAs with short (less than 25 nucleotides) poly(A) tails, hence facilitating global mRNA decay. Essential for both oocyte maturation and fertility. Through 3' terminal uridylation of mRNA, sculpts, with TUT7, the maternal transcriptome by eliminating transcripts during oocyte growth. Involved in microRNA (miRNA)-induced gene silencing through uridylation of deadenylated miRNA targets. Also functions as an integral regulator of microRNA biogenesiS using 3 different uridylation mechanisms. Acts as a suppressor of miRNA biogenesis by mediating the terminal uridylation of some miRNA precursors, including that of let-7 (pre-let-7), miR107, miR-143 and miR-200c. Uridylated miRNAs are not processed by Dicer and undergo degradation. Degradation of pre-let-7 contributes to the maintenance of embryonic stem (ES) cell pluripotency. Also catalyzes the 3' uridylation of miR-26A, a miRNA that targets IL6 transcript. This abrogates the silencing of IL6 transcript, hence promoting cytokine expression. In the absence of LIN28A, TUT7 and TUT4 monouridylate group II pre-miRNAs, which includes most of pre-let7 members, that shapes an optimal 3' end overhang for efficient processing. Add oligo-U tails to truncated pre-miRNAS with a 5' overhang which may promote rapid degradation of non-functional pre-miRNA species. May also suppress Toll-like receptor-induced NF-kappa-B activation via binding to T2BP. Does not play a role in replication-dependent histone mRNA degradation. Due to functional redundancy between TUT4 and TUT7, the identification of the specific role of each of these proteins is difficult. TUT4 and TUT7 restrict retrotransposition of long interspersed element-1 (LINE-1) in cooperation with MOV10 counteracting the RNA chaperonne activity of L1RE1. TUT7 uridylates LINE-1 mRNAs in the cytoplasm which inhibits initiation of reverse transcription once in the nucleus, whereas uridylation by TUT4 destabilizes mRNAs in cytoplasmic ribonucleoprotein granules. This Mus musculus (Mouse) protein is Terminal uridylyltransferase 4.